Reading from the N-terminus, the 215-residue chain is Protein transport protein sec22 (215 aa).

Residues Met-1–Gln-194 lie on the Cytoplasmic side of the membrane. Residues Arg-9–Met-118 enclose the Longin domain. In terms of domain architecture, v-SNARE coiled-coil homology spans Asn-133–Arg-193. The helical; Anchor for type IV membrane protein transmembrane segment at Tyr-195 to Ala-215 threads the bilayer.

It belongs to the synaptobrevin family. Component of two distinct SNARE complexes consisting of sed5, bos1, bet1 and sec22 or ufe1, use1, sec20 and sec22. Ykt6 can probably replace sec22 as subunit of either complex.

The protein resides in the membrane. It is found in the endoplasmic reticulum membrane. The protein localises to the golgi apparatus membrane. Functionally, nonessential SNARE involved in targeting and fusion of ER-derived transport vesicles with the Golgi complex as well as Golgi-derived retrograde transport vesicles with the ER. The chain is Protein transport protein sec22 (sec22) from Schizosaccharomyces pombe (strain 972 / ATCC 24843) (Fission yeast).